Reading from the N-terminus, the 239-residue chain is Probable plastid-lipid-associated protein 8, chloroplastic (239 aa).

The transit peptide at 1–52 (MAATASSLTIASSFSEPRTQIHSSRRLNLPLQYSIPYKVLRSRSRRLGLVVS) directs the protein to the chloroplast. Residue serine 53 is modified to N-acetylserine.

The protein belongs to the PAP/fibrillin family.

The protein localises to the plastid. The protein resides in the chloroplast. The chain is Probable plastid-lipid-associated protein 8, chloroplastic (PAP8) from Arabidopsis thaliana (Mouse-ear cress).